The following is a 361-amino-acid chain: Phenylalanine--tRNA ligase alpha subunit (361 aa).

Glu-260 provides a ligand contact to Mg(2+).

This sequence belongs to the class-II aminoacyl-tRNA synthetase family. Phe-tRNA synthetase alpha subunit type 1 subfamily. As to quaternary structure, tetramer of two alpha and two beta subunits. Requires Mg(2+) as cofactor.

The protein resides in the cytoplasm. It catalyses the reaction tRNA(Phe) + L-phenylalanine + ATP = L-phenylalanyl-tRNA(Phe) + AMP + diphosphate + H(+). The protein is Phenylalanine--tRNA ligase alpha subunit of Bartonella bacilliformis (strain ATCC 35685 / KC583 / Herrer 020/F12,63).